A 382-amino-acid chain; its full sequence is 26S proteasome non-ATPase regulatory subunit 6 (382 aa).

One can recognise a PCI domain in the interval 186-354; it reads QFKEASDLYL…GVIETTRSDA (169 aa).

It belongs to the proteasome subunit S10 family.

Functionally, acts as a regulatory subunit of the 26S proteasome which is involved in the ATP-dependent degradation of ubiquitinated proteins. The protein is 26S proteasome non-ATPase regulatory subunit 6 (psmD6) of Dictyostelium discoideum (Social amoeba).